The sequence spans 322 residues: ATP-dependent 6-phosphofructokinase (322 aa).

ATP-binding positions include glycine 12, 73-74, and 103-106; these read RF and GDGT. Aspartate 104 is a binding site for Mg(2+). Position 126–128 (126–128) interacts with substrate; it reads TID. The active-site Proton acceptor is aspartate 128. Arginine 155 contributes to the ADP binding site. Substrate contacts are provided by residues arginine 163 and 170–172; that span reads MGR. ADP contacts are provided by residues 186–188, lysine 212, and 214–216; these read GSE and KPS. Substrate is bound by residues glutamate 223, arginine 245, and 251-254; that span reads HTQR.

Belongs to the phosphofructokinase type A (PFKA) family. ATP-dependent PFK group I subfamily. Prokaryotic clade 'B1' sub-subfamily. In terms of assembly, homotetramer. Requires Mg(2+) as cofactor.

Its subcellular location is the cytoplasm. The enzyme catalyses beta-D-fructose 6-phosphate + ATP = beta-D-fructose 1,6-bisphosphate + ADP + H(+). The protein operates within carbohydrate degradation; glycolysis; D-glyceraldehyde 3-phosphate and glycerone phosphate from D-glucose: step 3/4. Its activity is regulated as follows. Allosterically activated by ADP and other diphosphonucleosides, and allosterically inhibited by phosphoenolpyruvate. Catalyzes the phosphorylation of D-fructose 6-phosphate to fructose 1,6-bisphosphate by ATP, the first committing step of glycolysis. This Mesomycoplasma hyopneumoniae (strain 7448) (Mycoplasma hyopneumoniae) protein is ATP-dependent 6-phosphofructokinase.